The following is a 152-amino-acid chain: Cytochrome c-type biogenesis CcmH-like mitochondrial protein (152 aa).

The Mitochondrial intermembrane segment spans residues 1-83 (MATEEDVKQR…ILYTPKFDLQ (83 aa)). Positions 26 and 29 each coordinate heme. A helical membrane pass occupies residues 84-104 (TAAIWLSPVIVGGVAAGVWAY). Residues 105–152 (QKHRQRTNVHIMALNLVRGVPLTPREKETMLDVLTPPPPANKWWWPGK) are Mitochondrial matrix-facing.

It belongs to the CcmH/CycL/Ccl2/NrfF family.

It localises to the mitochondrion inner membrane. Plays a role in mitochondrial cytochrome c maturation. Probable component of a heme lyase complex involved in the reduction of apocytochrome c. This Oryza sativa subsp. japonica (Rice) protein is Cytochrome c-type biogenesis CcmH-like mitochondrial protein.